A 153-amino-acid polypeptide reads, in one-letter code: Melatonin receptor type 1A X2.0 (153 aa).

Over 1–12 the chain is Cytoplasmic; that stretch reads HSSWYNRLFSNS. A helical membrane pass occupies residues 13–33; the sequence is GTICYVGLVWVLALGAILPNL. Residues 34 to 57 are Extracellular-facing; it reads FVGSLRCDPRIFSCTFAQYVSSYY. A helical transmembrane segment spans residues 58-78; sequence TIAVVIFHFFLPIGVVSYCYL. Residues 79–112 lie on the Cytoplasmic side of the membrane; sequence RIWVLVLNIRHRVKPDRHLHHQTWPYNIHGFITM. Residues 113–133 form a helical membrane-spanning segment; the sequence is FVVFVLFAVCWGPLNIIGLTV. The Extracellular segment spans residues 134-145; the sequence is AIYPPLGDSIPQ. The chain crosses the membrane as a helical span at residues 146–153; that stretch reads WLFVASYF.

Belongs to the G-protein coupled receptor 1 family.

Its subcellular location is the cell membrane. Functionally, high affinity receptor for melatonin. The activity of this receptor is mediated by pertussis toxin sensitive G proteins that inhibits adenylate cyclase activity. This is Melatonin receptor type 1A X2.0 from Xenopus laevis (African clawed frog).